The sequence spans 205 residues: Small heat shock protein hspG12 (205 aa).

The 171-residue stretch at 35–205 (KTIIDILPPM…YSNTIKININ (171 aa)) folds into the sHSP domain. Residues 99-147 (PSLLDTKEDEASIEEFDEDDIKPKSTETTSTLSNSKENKKDENKSKSTE) form a disordered region. Residues 109 to 118 (ASIEEFDEDD) are compositionally biased toward acidic residues. Basic and acidic residues predominate over residues 134–147 (KENKKDENKSKSTE).

Belongs to the small heat shock protein (HSP20) family.

This Dictyostelium discoideum (Social amoeba) protein is Small heat shock protein hspG12 (hspG12).